We begin with the raw amino-acid sequence, 466 residues long: Mitochondrial-processing peptidase subunit beta (466 aa).

H73 is a binding site for Zn(2+). Catalysis depends on E76, which acts as the Proton acceptor. Residues H77 and E153 each contribute to the Zn(2+) site.

Belongs to the peptidase M16 family. In terms of assembly, heterodimer of mppA (alpha) and mppB (beta) subunits, forming the mitochondrial processing protease (MPP) in which mppA is involved in substrate recognition and binding and mppB is the catalytic subunit. Zn(2+) is required as a cofactor.

The protein resides in the mitochondrion matrix. It catalyses the reaction Release of N-terminal transit peptides from precursor proteins imported into the mitochondrion, typically with Arg in position P2.. Binding to mppA is required for catalytic activity. Functionally, catalytic subunit of the essential mitochondrial processing protease (MPP), which cleaves the mitochondrial sequence off newly imported precursors proteins. Preferentially, cleaves after an arginine at position P2. In Lentinula edodes (Shiitake mushroom), this protein is Mitochondrial-processing peptidase subunit beta (mppB).